A 44-amino-acid chain; its full sequence is Cytochrome b559 subunit beta (44 aa).

Residues 19–35 (WLAVHTLAVPTVFFVGA) traverse the membrane as a helical segment. Histidine 23 contributes to the heme binding site.

It belongs to the PsbE/PsbF family. In terms of assembly, heterodimer of an alpha subunit and a beta subunit. PSII is composed of 1 copy each of membrane proteins PsbA, PsbB, PsbC, PsbD, PsbE, PsbF, PsbH, PsbI, PsbJ, PsbK, PsbL, PsbM, PsbT, PsbX, PsbY, PsbZ, Psb30/Ycf12, peripheral proteins PsbO, CyanoQ (PsbQ), PsbU, PsbV and a large number of cofactors. It forms dimeric complexes. Heme b serves as cofactor.

The protein resides in the cellular thylakoid membrane. This b-type cytochrome is tightly associated with the reaction center of photosystem II (PSII). PSII is a light-driven water:plastoquinone oxidoreductase that uses light energy to abstract electrons from H(2)O, generating O(2) and a proton gradient subsequently used for ATP formation. It consists of a core antenna complex that captures photons, and an electron transfer chain that converts photonic excitation into a charge separation. The protein is Cytochrome b559 subunit beta of Crocosphaera subtropica (strain ATCC 51142 / BH68) (Cyanothece sp. (strain ATCC 51142)).